We begin with the raw amino-acid sequence, 187 residues long: Elongation factor P (187 aa).

The protein belongs to the elongation factor P family.

The protein resides in the cytoplasm. It participates in protein biosynthesis; polypeptide chain elongation. Involved in peptide bond synthesis. Stimulates efficient translation and peptide-bond synthesis on native or reconstituted 70S ribosomes in vitro. Probably functions indirectly by altering the affinity of the ribosome for aminoacyl-tRNA, thus increasing their reactivity as acceptors for peptidyl transferase. This chain is Elongation factor P, found in Helicobacter acinonychis (strain Sheeba).